The following is an 81-amino-acid chain: MAVKIRLKRLGEKKNPFYRIIVADSRSPRNGRFIDEIGTYDPNYDPCKLNIDAEAAKKWLSNGAQPTEVVGKLFKMAGIEK.

The protein belongs to the bacterial ribosomal protein bS16 family.

The chain is Small ribosomal subunit protein bS16 from Lachnospira eligens (strain ATCC 27750 / DSM 3376 / VPI C15-48 / C15-B4) (Eubacterium eligens).